A 424-amino-acid chain; its full sequence is DNA primase DnaG (424 aa).

The Toprim domain maps to 171–245 (DDIIVVEGRA…DVDFVARAPP (75 aa)). Glutamate 177, aspartate 219, and aspartate 221 together coordinate Mg(2+).

This sequence belongs to the archaeal DnaG primase family. In terms of assembly, forms a ternary complex with MCM helicase and DNA. Mg(2+) serves as cofactor.

It carries out the reaction ssDNA + n NTP = ssDNA/pppN(pN)n-1 hybrid + (n-1) diphosphate.. In terms of biological role, RNA polymerase that catalyzes the synthesis of short RNA molecules used as primers for DNA polymerase during DNA replication. The sequence is that of DNA primase DnaG from Methanocaldococcus jannaschii (strain ATCC 43067 / DSM 2661 / JAL-1 / JCM 10045 / NBRC 100440) (Methanococcus jannaschii).